The primary structure comprises 784 residues: MPGVIPSESNGLSRGSPSKKNRLSLKFFQKKETKRALDFTDSQEDEEKASEYRGSEIDQVVPAAQSSPVSCEKRENLLPFVGLNNLGNTCYLNSILQVLYFCPGFKAGVKHLFNIISRKKEALKDDSIQKDKGSCKEDPLASYELICSLQSLIISVEQLQASFLLNPEKYTDELATQPRRLLNTLRELNPMYEGYLQHDAQEVLQCILGNIQETCQLLKKEEIKNLTEFSSKVEEKSLQKEETGGISSTETDSTRNLDDLKEQLPKGNWKRKSDGESGNMKKKVKLSRESQPLEENQRQTRSKRKATGDTLEASPKIIPKCVSENESAKPSQKKSKVKINWLKPATKQPSILSKFCSLGKITTNQRSKGQPKVNEGDLEEDLEKDGRDNTVNGSGPASPGSSVTPVDSSEAKSINKGAEQIGFELVEKLFQGQLVLRTRCLECESLTERREDFQDISVPVQEDELSKVEESSEISPEPKTEMKTLRWAISQFASVERIVGEDKYFCENCHHYTEAERSLLFDKMPEVITIHLKCFAASGLEFDCYGGGLSKINTPLLTPLKLSLEEWSTKPTNDSYGLFAVVMHSGITISSGHYTASVKVTDLNSLELDKGNFVVDQMCEIGKPEPLNEEEARGTAENYDDEVSIRVGGNAQPSKVLNKKNVEGIGLLGGQKSKADYELCSKASNPEKVVGTPFTDSRNSETNDTNGTQESDRSKESSDQTGINVSGLENKISYVVQSLKEYEGKWLLFDDSEVKVTEEKDFLNSLSPSTSPTSTPYLLFYKKL.

2 disordered regions span residues 1–21 and 33–54; these read MPGVIPSESNGLSRGSPSKKN and TKRALDFTDSQEDEEKASEYRG. A compositionally biased stretch (polar residues) spans 7 to 16; sequence SESNGLSRGS. A phosphoserine mark is found at serine 16, serine 42, and serine 67. A USP domain is found at 81–784; sequence VGLNNLGNTC…TPYLLFYKKL (704 aa). Catalysis depends on cysteine 90, which acts as the Nucleophile. Basic and acidic residues-rich tracts occupy residues 232–243 and 252–264; these read KVEEKSLQKEET and DSTRNLDDLKEQL. Disordered stretches follow at residues 232–341 and 363–411; these read KVEE…KINW and TNQR…SSEA. Residues 389-407 are compositionally biased toward polar residues; that stretch reads NTVNGSGPASPGSSVTPVD. At serine 475 the chain carries Phosphoserine. Histidine 593 acts as the Proton acceptor in catalysis. The segment at 686–723 is disordered; that stretch reads PEKVVGTPFTDSRNSETNDTNGTQESDRSKESSDQTGI. Polar residues predominate over residues 694 to 709; sequence FTDSRNSETNDTNGTQ. Serine 767 carries the post-translational modification Phosphoserine.

This sequence belongs to the peptidase C19 family. As to quaternary structure, interacts with FANCD2 and PCNA. Interacts with WDR48. Interacts with ATAD5; the interaction regulates USP1-mediated PCNA deubiquitination. Post-translationally, autocatalytic cleavage of USP1 following UV irradiation inactivates it, leading to an increase in ubiquitinated PCNA, recruitment of POLH and translesion synthesis. In terms of processing, ubiquitinated by the CRL2(KLHDC2) complex following autocatalytic cleavage, leading to its degradation: the CRL2(KLHDC2) complex recognizes the diglycine (Gly-Gly) at the C-terminus.

Its subcellular location is the nucleus. The enzyme catalyses Thiol-dependent hydrolysis of ester, thioester, amide, peptide and isopeptide bonds formed by the C-terminal Gly of ubiquitin (a 76-residue protein attached to proteins as an intracellular targeting signal).. Functionally, negative regulator of DNA damage repair which specifically deubiquitinates monoubiquitinated FANCD2. Also involved in PCNA-mediated translesion synthesis (TLS) by deubiquitinating monoubiquitinated PCNA. Has almost no deubiquitinating activity by itself and requires the interaction with WDR48 to have a high activity. In Rattus norvegicus (Rat), this protein is Ubiquitin carboxyl-terminal hydrolase 1.